A 331-amino-acid polypeptide reads, in one-letter code: Bifunctional nuclease 1 (331 aa).

Positions 126–261 (CVQNNPRVLR…RIAYNNGLKV (136 aa)) constitute a BFN domain. The UVR domain maps to 291–326 (EAQEFDLVRNMLVAAVEERYKDAAQYRDQLFMFRAK).

Belongs to the bifunctional nuclease family.

The protein resides in the nucleus. Functionally, bifunctional nuclease with both RNase and DNase activities. Involved in basal defense response. Participates in abscisic acid-derived callose deposition following infection by a necrotrophic pathogen. This Oryza sativa subsp. indica (Rice) protein is Bifunctional nuclease 1 (BBD1).